A 233-amino-acid chain; its full sequence is UPF0758 protein TTE0897 (233 aa).

The 123-residue stretch at 108–230 folds into the MPN domain; sequence SVTSPEDVIN…GISLKEKGYY (123 aa). Zn(2+) contacts are provided by His179, His181, and Asp192. The JAMM motif motif lies at 179–192; the sequence is HNHPSGDPTPSRED.

The protein belongs to the UPF0758 family.

The chain is UPF0758 protein TTE0897 from Caldanaerobacter subterraneus subsp. tengcongensis (strain DSM 15242 / JCM 11007 / NBRC 100824 / MB4) (Thermoanaerobacter tengcongensis).